We begin with the raw amino-acid sequence, 217 residues long: Cytidylate kinase (217 aa).

ATP is bound at residue 21 to 29 (GPAASGKGT).

The protein belongs to the cytidylate kinase family. Type 1 subfamily.

Its subcellular location is the cytoplasm. It catalyses the reaction CMP + ATP = CDP + ADP. The catalysed reaction is dCMP + ATP = dCDP + ADP. The chain is Cytidylate kinase from Rickettsia bellii (strain OSU 85-389).